The following is a 774-amino-acid chain: Protein translocase subunit SecA (774 aa).

Residues Gln66, 84 to 88, and Asp474 each bind ATP; that span reads GEGKS.

The protein belongs to the SecA family.

The protein resides in the plastid. Its subcellular location is the chloroplast stroma. It localises to the chloroplast thylakoid membrane. The catalysed reaction is ATP + H2O + cellular proteinSide 1 = ADP + phosphate + cellular proteinSide 2.. Has a central role in coupling the hydrolysis of ATP to the transfer of proteins across the thylakoid membrane. In Cyanidioschyzon merolae (strain NIES-3377 / 10D) (Unicellular red alga), this protein is Protein translocase subunit SecA.